Reading from the N-terminus, the 222-residue chain is Collectrin (222 aa).

Positions 1 to 14 are cleaved as a signal peptide; that stretch reads MLWALFFLVTTIHA. Residues 15 to 141 lie on the Extracellular side of the membrane; it reads ELCHPDAENA…LAPPMEPSVP (127 aa). Residues 21-222 enclose the Collectrin-like domain; that stretch reads AENAFKVRLS…LTEDERLTPL (202 aa). 2 N-linked (GlcNAc...) asparagine glycosylation sites follow: Asn-76 and Asn-93. The helical transmembrane segment at 142 to 162 threads the bilayer; that stretch reads VWIIVFGVIFCIVTVAIALLV. Topologically, residues 163 to 222 are cytoplasmic; sequence LSGIRQRRRNNKGPPGVEDAEDKCENIITIENGIPCDPLDMKGGHINDGFLTEDERLTPL. Residues Thr-214 and Thr-220 each carry the phosphothreonine modification.

This sequence belongs to the CLTRN family. In terms of assembly, monomer. Homodimer. Homodimer; dimerization prevents CLTRN cleavage by BACE2. Interacts with SNAPIN. Interacts with SLC6A18; this interaction regulates the trafficking of SLC6A18 to the cell membrane and its amino acid transporter activity. Interacts with SLC6A19; this interaction regulates the trafficking of SLC6A19 to the cell membrane and its amino acid transporter activity. Interacts with SLC6A20B. Post-translationally, glycosylated. Glycosylation is required for plasma membrane localization and for its cleavage by BACE2. Proteolytically processed in pancreatic beta cells by BACE2 leading to the generation and extracellular release of soluble CLTRN, and a corresponding cell-associated C-terminal fragment which is later cleaved by gamma-secretase. This shedding process inactivates CLTRN. Three cleavage sites have been identified for BACE2, two clustered sites after Phe-116 and Leu-118 and a more membrane proximal site at Phe-125; the preferred BACE2 cleavage site seems to be between Phe-125 and Leu-126, Phe-116 and Leu-118 act as alternative sites. As to expression, expressed on the apical surface of the proximal tubules in the renal cortex (at protein level). Kidney; collecting ducts and proximal tubule. Pancreas; beta cells of islets. Expressed in the cerebral cortex, hippocampus, brainstem and cerebellum.

Its subcellular location is the cell membrane. Its function is as follows. Plays an important role in amino acid transport by acting as binding partner of amino acid transporters SLC6A18 and SLC6A19, regulating their trafficking on the cell surface and their activity. May also play a role in trafficking of amino acid transporters SLC3A1 and SLC7A9 to the renal cortical cell membrane. Regulator of SNARE complex function. Stimulator of beta cell replication. This chain is Collectrin, found in Mus musculus (Mouse).